Reading from the N-terminus, the 56-residue chain is Large ribosomal subunit protein bL32 (56 aa).

The segment at 1–23 (MAVQQNKSTRSKRGMRRSHNALP) is disordered. Positions 9–19 (TRSKRGMRRSH) are enriched in basic residues.

This sequence belongs to the bacterial ribosomal protein bL32 family.

The polypeptide is Large ribosomal subunit protein bL32 (Blochmanniella floridana).